The following is a 94-amino-acid chain: UPF0298 protein SEQ_1830 (94 aa).

Belongs to the UPF0298 family.

Its subcellular location is the cytoplasm. This chain is UPF0298 protein SEQ_1830, found in Streptococcus equi subsp. equi (strain 4047).